Consider the following 174-residue polypeptide: Large ribosomal subunit protein bL17 (174 aa).

This sequence belongs to the bacterial ribosomal protein bL17 family. Part of the 50S ribosomal subunit. Contacts protein L32.

In Acetivibrio thermocellus (strain ATCC 27405 / DSM 1237 / JCM 9322 / NBRC 103400 / NCIMB 10682 / NRRL B-4536 / VPI 7372) (Clostridium thermocellum), this protein is Large ribosomal subunit protein bL17.